Reading from the N-terminus, the 209-residue chain is MTELDINEIEAYNSNKMGWIELITGCMFAGKTEEFIRRLRVLSYAKKRVLAFKPSIDNRYSVENIISHSGSKLDSYLVHSSDEIKQIIEKENQIQQVDVIGIDEVQFFDEQVVELIEQLANQGIIVIVNGLDKDFRCLPFKNVDKLLVTAEFVTKLRARCHLCGNFANRSQKIVNGQPALWDSPLILVDGKESYEARCRNCFIVPKKEV.

ATP contacts are provided by residues 25-32 (GCMFAGKT) and 103-106 (DEVQ). Residue Glu-104 is the Proton acceptor of the active site. Zn(2+)-binding residues include Cys-160, Cys-163, Cys-198, and Cys-201.

The protein belongs to the thymidine kinase family. As to quaternary structure, homotetramer.

The protein localises to the cytoplasm. The catalysed reaction is thymidine + ATP = dTMP + ADP + H(+). This chain is Thymidine kinase, found in Mycoplasma mycoides subsp. mycoides SC (strain CCUG 32753 / NCTC 10114 / PG1).